The primary structure comprises 148 residues: Large ribosomal subunit protein uL11 (148 aa).

Residues 89–108 are disordered; the sequence is EKKKGSGAHKPGKEKVGQVT.

This sequence belongs to the universal ribosomal protein uL11 family. In terms of assembly, part of the ribosomal stalk of the 50S ribosomal subunit. Interacts with L10 and the large rRNA to form the base of the stalk. L10 forms an elongated spine to which L12 dimers bind in a sequential fashion forming a multimeric L10(L12)X complex. Post-translationally, one or more lysine residues are methylated.

Forms part of the ribosomal stalk which helps the ribosome interact with GTP-bound translation factors. This Anaeromyxobacter dehalogenans (strain 2CP-1 / ATCC BAA-258) protein is Large ribosomal subunit protein uL11.